The sequence spans 31 residues: GVIPCGESCVFIPCISSVVGCTCKNKVCYRD.

Positions 1 to 31 form a cross-link, cyclopeptide (Gly-Asp); the sequence is GVIPCGESCVFIPCISSVVGCTCKNKVCYRD. Disulfide bonds link Cys5-Cys21, Cys9-Cys23, and Cys14-Cys28.

This is a cyclic peptide. In terms of processing, contains 3 disulfide bonds.

In terms of biological role, probably participates in a plant defense mechanism (Potential). Binds to and induces leakage in phospholipd membranes, particularly ones containing 1-palmitoyl-2-oleophosphatidylethanolamine (POPE). In Melicytus chathamicus (Chatham Island mahoe), this protein is Cyclotide mech-5.